The following is a 50-amino-acid chain: Protease inhibitor 2 (50 aa).

Residues Glu-2–Cys-50 enclose the Kazal-like domain. Cystine bridges form between Cys-10/Cys-29 and Cys-18/Cys-50. N-linked (GlcNAc...) asparagine glycosylation is found at Asn-30 and Asn-41.

Its function is as follows. Serine protease inhibitor. Strongly inhibits human neutrophil elastase and trypsin, also inhibits porcine pancreatic elastase and subtilisin A. Does not inhibit chymotrypsin, plasma kallikrein, pancreatic kallikrein, thrombin or papain. In Cenchritis muricatus (Beaded periwinkle), this protein is Protease inhibitor 2.